The following is a 294-amino-acid chain: Phosphatidylglycerol--prolipoprotein diacylglyceryl transferase (294 aa).

The next 7 helical transmembrane spans lie at Val-19 to Leu-39, Leu-69 to Tyr-89, Ile-101 to Ala-121, Ile-139 to Ala-159, Gln-195 to Trp-215, Gly-224 to Phe-244, and Trp-267 to Ile-287. Arg-152 contributes to the a 1,2-diacyl-sn-glycero-3-phospho-(1'-sn-glycerol) binding site.

It belongs to the Lgt family.

It localises to the cell inner membrane. It catalyses the reaction L-cysteinyl-[prolipoprotein] + a 1,2-diacyl-sn-glycero-3-phospho-(1'-sn-glycerol) = an S-1,2-diacyl-sn-glyceryl-L-cysteinyl-[prolipoprotein] + sn-glycerol 1-phosphate + H(+). Its pathway is protein modification; lipoprotein biosynthesis (diacylglyceryl transfer). In terms of biological role, catalyzes the transfer of the diacylglyceryl group from phosphatidylglycerol to the sulfhydryl group of the N-terminal cysteine of a prolipoprotein, the first step in the formation of mature lipoproteins. The protein is Phosphatidylglycerol--prolipoprotein diacylglyceryl transferase of Roseobacter denitrificans (strain ATCC 33942 / OCh 114) (Erythrobacter sp. (strain OCh 114)).